The sequence spans 309 residues: DnaJ-like protein MG002 homolog (309 aa).

Residues 1-66 (MTLYDLLELP…KAEYDAMLRF (66 aa)) form the J domain.

The chain is DnaJ-like protein MG002 homolog from Mycoplasma pneumoniae (strain ATCC 29342 / M129 / Subtype 1) (Mycoplasmoides pneumoniae).